A 787-amino-acid polypeptide reads, in one-letter code: Endonuclease MutS2 (787 aa).

An ATP-binding site is contributed by Gly-329–Thr-336. In terms of domain architecture, Smr spans Ile-712 to Lys-787.

Belongs to the DNA mismatch repair MutS family. MutS2 subfamily. In terms of assembly, homodimer. Binds to stalled ribosomes, contacting rRNA.

Functionally, endonuclease that is involved in the suppression of homologous recombination and thus may have a key role in the control of bacterial genetic diversity. In terms of biological role, acts as a ribosome collision sensor, splitting the ribosome into its 2 subunits. Detects stalled/collided 70S ribosomes which it binds and splits by an ATP-hydrolysis driven conformational change. Acts upstream of the ribosome quality control system (RQC), a ribosome-associated complex that mediates the extraction of incompletely synthesized nascent chains from stalled ribosomes and their subsequent degradation. Probably generates substrates for RQC. This chain is Endonuclease MutS2, found in Lachnospira eligens (strain ATCC 27750 / DSM 3376 / VPI C15-48 / C15-B4) (Eubacterium eligens).